Here is a 132-residue protein sequence, read N- to C-terminus: Riboflavin kinase (132 aa).

10-15 (GLGEGR) provides a ligand contact to CDP. Residues T39 and N41 each contribute to the Mg(2+) site. T95, Y96, and E103 together coordinate FMN. 108–111 (MKLR) serves as a coordination point for CDP.

As to quaternary structure, monomer. Mg(2+) serves as cofactor.

The catalysed reaction is riboflavin + CTP = CDP + FMN + H(+). Its pathway is cofactor biosynthesis; FMN biosynthesis; FMN from riboflavin (CTP route): step 1/1. In terms of biological role, catalyzes the CTP-dependent phosphorylation of riboflavin (vitamin B2) to form flavin mononucleotide (FMN). Can also utilize UTP as the phosphate donor, although less efficiently, and it is unclear if ATP and GTP can also serve as substrates or not. The chain is Riboflavin kinase (ribK) from Methanocaldococcus jannaschii (strain ATCC 43067 / DSM 2661 / JAL-1 / JCM 10045 / NBRC 100440) (Methanococcus jannaschii).